A 111-amino-acid chain; its full sequence is UPF0122 protein YofM (111 aa).

The protein belongs to the UPF0122 family.

Its function is as follows. Might take part in the signal recognition particle (SRP) pathway. This is inferred from the conservation of its genetic proximity to ftsY/ffh. May be a regulatory protein. This Lactococcus lactis subsp. lactis (strain IL1403) (Streptococcus lactis) protein is UPF0122 protein YofM (yofM).